We begin with the raw amino-acid sequence, 215 residues long: UPF0502 protein YceH (215 aa).

Lysine 80 is modified (N6-acetyllysine).

The protein belongs to the UPF0502 family.

This chain is UPF0502 protein YceH, found in Escherichia coli O127:H6 (strain E2348/69 / EPEC).